Here is a 269-residue protein sequence, read N- to C-terminus: Type II restriction enzyme SfiI (269 aa).

It catalyses the reaction Endonucleolytic cleavage of DNA to give specific double-stranded fragments with terminal 5'-phosphates.. Its function is as follows. An F and P subtype restriction enzyme that recognizes the double-stranded sequence 5'-GGCCN(5)GGCC-3' and cleaves before N-9. The sequence is that of Type II restriction enzyme SfiI (sfiIR) from Streptomyces fimbriatus.